We begin with the raw amino-acid sequence, 238 residues long: MNDFLNSTSTVPEFVGASEIGDTIGMVIPRVDQQLLDKLHVTKQYKTLGILSDRTGAGPQIMAMDEGIKATNMECIDVEWPRDTKGGGGHGCLIIIGGDDPADARQAIRVALDNLHRTFGDVYNAKAGHLELQFTARAAGAAHLGLGAVEGKAFGLICGCPSGIGVVMGDKALKTAGVEPLNFTSPSHGTSFSNEGCLTITGDSGAVRQAVMAGREVGLKLLSQFGEEPVNDFPSYIK.

BMC circularly permuted domains are found at residues 14-125 and 126-225; these read FVGA…VYNA and KAGH…LSQF. A disulfide bridge connects residues Cys-158 and Cys-197.

It belongs to the EutL/PduB family. Homotrimerizes to form a pseudohexamer with a central pore 7.5 Angstroms wide and 22 Angstroms long; the pore channel in the crystal binds up to 4 glycerol molecules. A disulfide bond forms in the pore, it is not clear if this is an artifact. The trimers pack into an array.

It is found in the bacterial microcompartment. It participates in polyol metabolism; 1,2-propanediol degradation. One of the major shell proteins of the bacterial microcompartment (BMC) dedicated to 1,2-propanediol (1,2-PD) degradation. Probably involved in a propanediol fermentation/reuterin formation pathway. This is Bacterial microcompartment shell protein PduB from Limosilactobacillus reuteri (strain DSM 20016) (Lactobacillus reuteri).